The primary structure comprises 207 residues: 3-hexulose-6-phosphate synthase (207 aa).

It belongs to the HPS/KGPDC family. HPS subfamily.

The catalysed reaction is D-ribulose 5-phosphate + formaldehyde = D-arabino-hex-3-ulose 6-phosphate. It functions in the pathway one-carbon metabolism; formaldehyde assimilation via RuMP pathway; D-fructose 6-phosphate from D-ribulose 5-phosphate and formaldehyde: step 1/2. Catalyzes the condensation of ribulose 5-phosphate with formaldehyde to form 3-hexulose 6-phosphate. This is 3-hexulose-6-phosphate synthase (rmpA) from Mycobacterium gastri.